Here is a 623-residue protein sequence, read N- to C-terminus: AM-toxin biosynthesis protein 12-2 (623 aa).

The tract at residues 110 to 129 is disordered; it reads TIPGTSQAKNTEPDHQASGL.

It participates in mycotoxin biosynthesis. Functionally, part of the gene clusters that mediate the biosynthesis of AM-toxins, host-selective toxins (HSTs) causing Alternaria blotch on apple, a worldwide distributed disease. AM-toxins are cyclic depsipeptides containing the 3 residues 2-hydroxy-isovaleric acid (2-HIV), dehydroalanine, L-alanine which are common for all 3 AM-toxins I to III. The fourth precursor is L-alpha-amino-methoxyphenyl-valeric acid (L-Amv) for AM-toxin I, L-alpha-amino-phenyl-valeric acid (L-Apv) for AM-toxin II, and L-alpha-amino-hydroxyphenyl-valeric acid (L-Ahv) for AM-toxin III. AM-toxins have two target sites for affecting susceptible apple cells; they cause invagination of the plasma membrane and electrolyte loss and chloroplast disorganization. The non-ribosomal peptide synthetase AMT1 contains 4 catalytic modules and is responsible for activation of each residue in AM-toxin. The aldo-keto reductase AMT2 catalyzes the conversion of 2-keto-isovaleric acid (2-KIV) to 2-hydroxy-isovaleric acid (2-HIV), one of the precursor residues incorporated by AMT1 during AM-toxin biosynthesis, by reduction of its ketone to an alcohol. The cytochrome P450 monooxygenase AMT3 and the thioesterase AMT4 are also important for AM-toxin production, but their exact function within the AM-toxin biosynthesis are not known yet. Up to 21 proteins (including AMT1 to AMT4) are predicted to be involved in AM-toxin biosynthesis since their expression ishighly up-regulated in AM-toxin-producing cultures. This Alternaria alternata (Alternaria rot fungus) protein is AM-toxin biosynthesis protein 12-2.